Reading from the N-terminus, the 164-residue chain is Anterior gradient protein 2-B (164 aa).

Positions 1 to 20 are cleaved as a signal peptide; sequence MESVLKSLFVLLVATSFTLA. Short sequence motifs (homodimer stabilization; interchain) lie at residues 34–43 and 49–56; these read SRGWGDNLEW and EGLYKAKA.

The protein belongs to the AGR family. As to quaternary structure, monomer and homodimer.

Its subcellular location is the secreted. It is found in the endoplasmic reticulum. This is Anterior gradient protein 2-B (agr2-b) from Xenopus laevis (African clawed frog).